The chain runs to 449 residues: Glutamyl-tRNA reductase (449 aa).

Substrate contacts are provided by residues 58-61 (TCNR), serine 121, 126-128 (ETQ), and glutamine 132. The active-site Nucleophile is cysteine 59. 203-208 (GLGEMA) serves as a coordination point for NADP(+).

This sequence belongs to the glutamyl-tRNA reductase family. Homodimer.

The catalysed reaction is (S)-4-amino-5-oxopentanoate + tRNA(Glu) + NADP(+) = L-glutamyl-tRNA(Glu) + NADPH + H(+). The protein operates within porphyrin-containing compound metabolism; protoporphyrin-IX biosynthesis; 5-aminolevulinate from L-glutamyl-tRNA(Glu): step 1/2. In terms of biological role, catalyzes the NADPH-dependent reduction of glutamyl-tRNA(Glu) to glutamate 1-semialdehyde (GSA). This chain is Glutamyl-tRNA reductase, found in Helicobacter pylori (strain P12).